Reading from the N-terminus, the 333-residue chain is MNSSNLENFNYKSSIRDEVVPSRKRLTLPPWLEVAKPRLIPLLLATTLGGMALTEEWPLSSPKLICTLGGGALAAAAAGALNCLWEMELDKRMIRTSKRALPSGKLSSETVFLAAVSCTLAASMLLISGVNYLAAGLTLLGLCSYVILYTVILKPRTTKNIVFGGVAGAIPPLVGASAATGHVGLSGWWLFGLVMLWTPAHFWALAILLKDDYASVGIPMLPSVKGSLFTAKAISRYGLATVLMSIMGVFALPEGGLLYGIMLLPFNGRLLQLINKLKKSPDDLLRAKSLFRWSILYMFGICLLLLISRTQLSVEFEQQSMQIFFSIGSLLSN.

The next 7 helical transmembrane spans lie at 64–84 (LICT…LNCL), 110–130 (TVFL…ISGV), 133–153 (LAAG…TVIL), 161–181 (IVFG…AATG), 189–209 (WLFG…AILL), 246–266 (IMGV…LLPF), and 287–307 (AKSL…LLLI).

Belongs to the UbiA prenyltransferase family. Protoheme IX farnesyltransferase subfamily.

Its subcellular location is the cell inner membrane. The enzyme catalyses heme b + (2E,6E)-farnesyl diphosphate + H2O = Fe(II)-heme o + diphosphate. It functions in the pathway porphyrin-containing compound metabolism; heme O biosynthesis; heme O from protoheme: step 1/1. In terms of biological role, converts heme B (protoheme IX) to heme O by substitution of the vinyl group on carbon 2 of heme B porphyrin ring with a hydroxyethyl farnesyl side group. In Prochlorococcus marinus (strain MIT 9312), this protein is Protoheme IX farnesyltransferase.